The primary structure comprises 310 residues: MNTQARLTSTQWKARFKGYVQVTKPGIIFGNLISVAGGFLLAAKGDVDLVLMLASLVGLSLVVASGCAINNCIDRDIDAKMQRTCKRVTVTGEIPLSHVLLFGIALGVLGFGILALFTNALALLFAAIGYVVYVGIYSLYMKRNSVYGTLVGSFSGAVPPVVGYCSVTGQMDMGAVILLLMFSLWQMPHSYAIAIFRFNDYAAAKIPVLPVAEGMAKAKHHIVLYIAVFALVSTMLPLAGYTGTAFMAVTCATSLWWLTMALKGYRQDVDMPRWARQVFGFSIITITALSVTMALDFQAVSQTPLFTLVR.

Transmembrane regions (helical) follow at residues 25-45, 49-69, 98-118, 121-141, 145-165, 176-196, 222-242, 245-265, and 277-297; these read PGII…AAKG, LVLM…GCAI, HVLL…ALFT, LALL…SLYM, SVYG…VGYC, VILL…IAIF, IVLY…AGYT, AFMA…LKGY, and QVFG…ALDF.

It belongs to the UbiA prenyltransferase family. Protoheme IX farnesyltransferase subfamily.

The protein resides in the cell inner membrane. It carries out the reaction heme b + (2E,6E)-farnesyl diphosphate + H2O = Fe(II)-heme o + diphosphate. Its pathway is porphyrin-containing compound metabolism; heme O biosynthesis; heme O from protoheme: step 1/1. Its function is as follows. Converts heme B (protoheme IX) to heme O by substitution of the vinyl group on carbon 2 of heme B porphyrin ring with a hydroxyethyl farnesyl side group. The polypeptide is Protoheme IX farnesyltransferase 2 (Shewanella sp. (strain ANA-3)).